A 748-amino-acid chain; its full sequence is E3 ubiquitin-protein ligase SMURF2 (748 aa).

Residues Met-1–Lys-119 enclose the C2 domain. Lys-119 participates in a covalent cross-link: Glycyl lysine isopeptide (Lys-Gly) (interchain with G-Cter in ubiquitin). WW domains lie at Asn-157–Arg-190, Pro-251–Val-284, and Gly-297–Leu-330. One can recognise an HECT domain in the interval Arg-414–Glu-748. Cys-716 acts as the Glycyl thioester intermediate in catalysis.

As to quaternary structure, interacts (via WW domains) with SMAD1. Interacts (via WW domains) with SMAD2 (via PY-motif). Interacts (via WW domains) with SMAD3 (via PY-motif). Interacts with SMAD6. Interacts with SMAD7 (via PY-motif) and TGFBR1; SMAD7 recruits SMURF2 to the TGF-beta receptor and regulates its degradation. Does not interact with SMAD4; SMAD4 lacks a PY-motif. Interacts with AIMP1. Interacts with SNON. Interacts with STAMBP and RNF11. May interact with NDFIP1 and NDFIP2; this interaction induces the E3 ubiquitin-protein ligase activity. Interacts with TTC3. In terms of assembly, (Microbial infection) Interacts (via WW domains) with EBOV and MARV VP40 (via PPXY motif); the interaction facilitates VP40 virus-like particle budding. In terms of processing, auto-ubiquitinated and ubiquitinated in the presence of RNF11 and UBE2D1. Ubiquitinated by the SCF(FBXL15) complex and TTC3, leading to its degradation by the proteasome. 'Lys-48'-linked polyubiquitination mediated by TRAF4 at Lys-119 leads to SMURF2 proteasomal degradation. Widely expressed.

The protein localises to the nucleus. It is found in the cytoplasm. Its subcellular location is the cell membrane. It localises to the membrane raft. It carries out the reaction S-ubiquitinyl-[E2 ubiquitin-conjugating enzyme]-L-cysteine + [acceptor protein]-L-lysine = [E2 ubiquitin-conjugating enzyme]-L-cysteine + N(6)-ubiquitinyl-[acceptor protein]-L-lysine.. The protein operates within protein modification; protein ubiquitination. With respect to regulation, activated by NDFIP1- and NDFIP2-binding. Its function is as follows. E3 ubiquitin-protein ligase which accepts ubiquitin from an E2 ubiquitin-conjugating enzyme in the form of a thioester and then directly transfers the ubiquitin to targeted substrates. Interacts with SMAD7 to trigger SMAD7-mediated transforming growth factor beta/TGF-beta receptor ubiquitin-dependent degradation, thereby down-regulating TGF-beta signaling. In addition, interaction with SMAD7 activates autocatalytic degradation, which is prevented by interaction with AIMP1. Also forms a stable complex with TGF-beta receptor-mediated phosphorylated SMAD1, SMAD2 and SMAD3, and targets SMAD1 and SMAD2 for ubiquitination and proteasome-mediated degradation. SMAD2 may recruit substrates, such as SNON, for ubiquitin-dependent degradation. Negatively regulates TGFB1-induced epithelial-mesenchymal transition and myofibroblast differentiation. Functionally, (Microbial infection) In case of filoviruses Ebola/EBOV and Marburg/MARV infection, the complex formed by viral matrix protein VP40 and SMURF2 facilitates virus budding. This is E3 ubiquitin-protein ligase SMURF2 from Homo sapiens (Human).